We begin with the raw amino-acid sequence, 114 residues long: Beta-microseminoprotein (114 aa).

The first 20 residues, 1-20, serve as a signal peptide directing secretion; sequence MNVLLGGFVIFATFVTLCNA. 5 cysteine pairs are disulfide-bonded: Cys-22/Cys-70, Cys-38/Cys-62, Cys-57/Cys-93, Cys-60/Cys-69, and Cys-84/Cys-107.

It belongs to the beta-microseminoprotein family. In terms of assembly, homodimer; Interacts with PI16.

The protein localises to the secreted. The protein is Beta-microseminoprotein (MSMB) of Macaca mulatta (Rhesus macaque).